Here is a 638-residue protein sequence, read N- to C-terminus: Bifunctional protein glk (638 aa).

Residues 1-20 (MSTGVQTKAAPGAGQHADGP) form a disordered region. The interval 1–341 (MSTGVQTKAA…QLSNRAGGSS (341 aa)) is glucokinase. An ATP-binding site is contributed by 24-29 (ADIGGT). The 77-residue stretch at 342–418 (SAVFERIRQM…LKLATGLTGT (77 aa)) folds into the HTH rpiR-type domain. Residues 342 to 638 (SAVFERIRQM…SHGAASSARD (297 aa)) form a putative HTH-type transcriptional regulator region. Residues 378–397 (IVDIARKADVSQPTVIRFCR) constitute a DNA-binding region (H-T-H motif). The SIS domain occupies 462–601 (AIDLLNGARR…AVGVAIRRAV (140 aa)).

In the N-terminal section; belongs to the bacterial glucokinase family.

It localises to the cytoplasm. The enzyme catalyses D-glucose + ATP = D-glucose 6-phosphate + ADP + H(+). The polypeptide is Bifunctional protein glk (glk) (Paraburkholderia xenovorans (strain LB400)).